A 384-amino-acid polypeptide reads, in one-letter code: Queuine tRNA-ribosyltransferase (384 aa).

Aspartate 93 functions as the Proton acceptor in the catalytic mechanism. Residues 93-97 (DSGGF), aspartate 147, glutamine 202, and glycine 229 contribute to the substrate site. An RNA binding region spans residues 260-266 (GVGYPEE). Catalysis depends on aspartate 279, which acts as the Nucleophile. The tract at residues 284–288 (TRAAR) is RNA binding; important for wobble base 34 recognition. Zn(2+) contacts are provided by cysteine 317, cysteine 319, cysteine 322, and histidine 348.

It belongs to the queuine tRNA-ribosyltransferase family. As to quaternary structure, homodimer. Within each dimer, one monomer is responsible for RNA recognition and catalysis, while the other monomer binds to the replacement base PreQ1. It depends on Zn(2+) as a cofactor.

The catalysed reaction is 7-aminomethyl-7-carbaguanine + guanosine(34) in tRNA = 7-aminomethyl-7-carbaguanosine(34) in tRNA + guanine. It functions in the pathway tRNA modification; tRNA-queuosine biosynthesis. In terms of biological role, catalyzes the base-exchange of a guanine (G) residue with the queuine precursor 7-aminomethyl-7-deazaguanine (PreQ1) at position 34 (anticodon wobble position) in tRNAs with GU(N) anticodons (tRNA-Asp, -Asn, -His and -Tyr). Catalysis occurs through a double-displacement mechanism. The nucleophile active site attacks the C1' of nucleotide 34 to detach the guanine base from the RNA, forming a covalent enzyme-RNA intermediate. The proton acceptor active site deprotonates the incoming PreQ1, allowing a nucleophilic attack on the C1' of the ribose to form the product. After dissociation, two additional enzymatic reactions on the tRNA convert PreQ1 to queuine (Q), resulting in the hypermodified nucleoside queuosine (7-(((4,5-cis-dihydroxy-2-cyclopenten-1-yl)amino)methyl)-7-deazaguanosine). This chain is Queuine tRNA-ribosyltransferase, found in Koribacter versatilis (strain Ellin345).